The sequence spans 796 residues: Exocyst complex component 3 (796 aa).

Residues 87 to 174 (PQLKEKLREL…GTNTEKEQML (88 aa)) are a coiled coil.

Belongs to the SEC6 family. As to quaternary structure, the exocyst complex is composed of sec-3/exoc1, sec-5/exoc2, sec-6/exoc3, sec-8/exoc4, sec-10/exoc5, sec-15/exoc6, exo-70/exoc7 and exo-84/exoc8.

In terms of biological role, component of the exocyst complex involved in the docking of exocytic vesicles with fusion sites on the plasma membrane. In Caenorhabditis elegans, this protein is Exocyst complex component 3 (sec-6).